Consider the following 296-residue polypeptide: Putative ankyrin repeat protein FPV216 (296 aa).

ANK repeat units lie at residues 73–102 (SYVN…DVNT) and 107–136 (LVIT…NINI).

In Fowlpox virus (strain NVSL) (FPV), this protein is Putative ankyrin repeat protein FPV216.